A 989-amino-acid polypeptide reads, in one-letter code: Phosphoenolpyruvate carboxylase (989 aa).

Active-site residues include H175 and K630.

Belongs to the PEPCase type 1 family. Mg(2+) is required as a cofactor.

It catalyses the reaction oxaloacetate + phosphate = phosphoenolpyruvate + hydrogencarbonate. Functionally, forms oxaloacetate, a four-carbon dicarboxylic acid source for the tricarboxylic acid cycle. This Prochlorococcus marinus subsp. pastoris (strain CCMP1986 / NIES-2087 / MED4) protein is Phosphoenolpyruvate carboxylase.